The chain runs to 818 residues: Serine/threonine-protein kinase PTK2/STK2 (818 aa).

Polar residues predominate over residues 28–39 (NSSSHTDNSSLL). 2 disordered regions span residues 28–100 (NSSS…GSVS) and 117–177 (NPYL…SHHF). Thr-56 carries the post-translational modification Phosphothreonine. The segment covering 57-81 (SPSISGSGSGGNSPSSSAGARQRSA) has biased composition (low complexity). A phosphoserine mark is found at Ser-59 and Ser-80. The segment covering 136–160 (TRDRDRAVLDREKEKERARNKERNT) has biased composition (basic and acidic residues). The Protein kinase domain maps to 255-562 (DTDNKPIGSG…MDDLFNDPFF (308 aa)). Residues 261-269 (IGSGGSSEV) and Lys-285 each bind ATP. The active-site Proton acceptor is Asp-388. Over residues 585–595 (STSTNDFSENS) the composition is skewed to polar residues. The interval 585-795 (STSTNDFSEN…SVSSSKKKKV (211 aa)) is disordered. Residues Ser-623 and Ser-632 each carry the phosphoserine modification. 2 stretches are compositionally biased toward basic and acidic residues: residues 638–651 (KVKD…HDVG) and 659–685 (TKPK…KVIE). Ser-694 carries the post-translational modification Phosphoserine. Phosphothreonine is present on Thr-700. At Ser-711 the chain carries Phosphoserine. The span at 727-736 (TPTTPTHNGP) shows a compositional bias: low complexity. Thr-737 is modified (phosphothreonine). Residues Ser-752, Ser-755, Ser-778, and Ser-781 each carry the phosphoserine modification. The segment covering 755–767 (SLKSETPASTKNF) has biased composition (polar residues). The segment covering 768–789 (SAPNVSSSSNSLRSLGSPSVSS) has biased composition (low complexity).

This sequence belongs to the protein kinase superfamily. Ser/Thr protein kinase family.

It is found in the nucleus. It localises to the cytoplasm. It carries out the reaction L-seryl-[protein] + ATP = O-phospho-L-seryl-[protein] + ADP + H(+). The catalysed reaction is L-threonyl-[protein] + ATP = O-phospho-L-threonyl-[protein] + ADP + H(+). In terms of biological role, essential determinant for high-affinity spermidine transport. Required for the activation of the plasma membrane proton pump PMA1 via phosphorylation of 'Ser-899'. This Saccharomyces cerevisiae (strain ATCC 204508 / S288c) (Baker's yeast) protein is Serine/threonine-protein kinase PTK2/STK2 (PTK2).